An 83-amino-acid chain; its full sequence is UPF0346 protein M28_Spy0369 (83 aa).

Belongs to the UPF0346 family.

In Streptococcus pyogenes serotype M28 (strain MGAS6180), this protein is UPF0346 protein M28_Spy0369.